A 177-amino-acid chain; its full sequence is Crossover junction endodeoxyribonuclease RuvC (177 aa).

Residues Asp-8, Glu-72, and Asp-144 contribute to the active site. The Mg(2+) site is built by Asp-8, Glu-72, and Asp-144.

Belongs to the RuvC family. As to quaternary structure, homodimer which binds Holliday junction (HJ) DNA. The HJ becomes 2-fold symmetrical on binding to RuvC with unstacked arms; it has a different conformation from HJ DNA in complex with RuvA. In the full resolvosome a probable DNA-RuvA(4)-RuvB(12)-RuvC(2) complex forms which resolves the HJ. Mg(2+) serves as cofactor.

The protein resides in the cytoplasm. The enzyme catalyses Endonucleolytic cleavage at a junction such as a reciprocal single-stranded crossover between two homologous DNA duplexes (Holliday junction).. Its function is as follows. The RuvA-RuvB-RuvC complex processes Holliday junction (HJ) DNA during genetic recombination and DNA repair. Endonuclease that resolves HJ intermediates. Cleaves cruciform DNA by making single-stranded nicks across the HJ at symmetrical positions within the homologous arms, yielding a 5'-phosphate and a 3'-hydroxyl group; requires a central core of homology in the junction. The consensus cleavage sequence is 5'-(A/T)TT(C/G)-3'. Cleavage occurs on the 3'-side of the TT dinucleotide at the point of strand exchange. HJ branch migration catalyzed by RuvA-RuvB allows RuvC to scan DNA until it finds its consensus sequence, where it cleaves and resolves the cruciform DNA. This Teredinibacter turnerae (strain ATCC 39867 / T7901) protein is Crossover junction endodeoxyribonuclease RuvC.